The chain runs to 158 residues: Pyruvoyl-dependent arginine decarboxylase (158 aa).

At S44 the chain carries Pyruvic acid (Ser).

This sequence belongs to the PdaD family. Pyruvate is required as a cofactor.

It catalyses the reaction L-arginine + H(+) = agmatine + CO2. This chain is Pyruvoyl-dependent arginine decarboxylase, found in Pyrococcus furiosus (strain ATCC 43587 / DSM 3638 / JCM 8422 / Vc1).